Here is a 1068-residue protein sequence, read N- to C-terminus: Huntingtin-interacting protein 1-related protein (1068 aa).

Met1 carries the post-translational modification N-acetylmethionine. The region spanning 23-151 (EREQFDKTQA…SFHLKHPQFP (129 aa)) is the ENTH domain. Positions 346–644 (GSMKDDRDLQ…LQDAVSKLDD (299 aa)) form a coiled coil. The interval 582–610 (EALSQEQQRSSQEKGELRGQLAEKESQEQ) is disordered. The span at 592–608 (SQEKGELRGQLAEKESQ) shows a compositional bias: basic and acidic residues. Positions 771-1012 (SLDVRQEELG…ELRKQHYVLA (242 aa)) constitute an I/LWEQ domain. Residues 867–924 (RWTEGLISASKAVGWGATQLVESADKVVLHMGKYEELIVCSHEIAASTAQLVAASKVK) are important for actin binding. The interval 1011-1068 (LAGGMGTPSEEEPSRPSPAPRSGATKKPPLAQKPSIAPRTDNQLDKKDGVYPAQLVNY) is disordered.

It belongs to the SLA2 family. Homodimer. Interacts with actin; homodimerization promotes actin binding. Interacts with CLTB. Interacts with HIP1. Interacts (via ENTH and I/LWEQ domains) with BCL2L10. As to expression, widely expressed. Expressed at lower levels in skeletal muscle and heart. The level of expression does not change appreciably during development.

The protein localises to the cytoplasm. It localises to the perinuclear region. The protein resides in the endomembrane system. It is found in the cytoplasmic vesicle. Its subcellular location is the clathrin-coated vesicle membrane. Functionally, component of clathrin-coated pits and vesicles, that may link the endocytic machinery to the actin cytoskeleton. Binds 3-phosphoinositides (via ENTH domain). May act through the ENTH domain to promote cell survival by stabilizing receptor tyrosine kinases following ligand-induced endocytosis. The sequence is that of Huntingtin-interacting protein 1-related protein (Hip1r) from Mus musculus (Mouse).